The following is a 1338-amino-acid chain: Insulin receptor substrate 2 (1338 aa).

The segment covering Met1–Pro12 has biased composition (pro residues). 2 disordered regions span residues Met1–Val31 and Val49–Arg72. Positions Asp16–Ser144 constitute a PH domain. Residues Asn19–Asn28 are compositionally biased toward low complexity. The segment covering Pro53–Ser66 has biased composition (gly residues). The 105-residue stretch at Tyr194–Phe298 folds into the IRS-type PTB domain. The interval Arg303–Gly411 is disordered. Ser306 and Ser346 each carry phosphoserine. Position 350 is a phosphothreonine (Thr350). Phosphoserine occurs at positions 365, 384, 388, and 391. Arg412 is modified (omega-N-methylarginine). The tract at residues Ser428–Gly537 is disordered. The segment covering Ser444–Gly453 has biased composition (low complexity). The segment covering Tyr459 to His471 has biased composition (pro residues). Residues His475–Ser493 show a composition bias toward low complexity. A Phosphothreonine modification is found at Thr520. At Ser523 the chain carries Phosphoserine. Thr527 carries the post-translational modification Phosphothreonine. Phosphotyrosine; by INSR is present on Tyr540. Positions Tyr540–Met543 match the YXXM motif 1 motif. Ser560 bears the Phosphoserine; by PLK1 mark. Ser577 bears the Phosphoserine mark. Residues Thr579 and Thr580 each carry the phosphothreonine modification. Ser594 is modified (phosphoserine). The YXXM motif 2 motif lies at Tyr598–Met601. Residues Ser608 and Ser620 each carry the phosphoserine modification. Phosphotyrosine; by INSR is present on residues Tyr653 and Tyr675. 2 consecutive short sequence motifs (YXXM motif) follow at residues Tyr653 to Met656 and Tyr675 to Met678. Ser679 and Ser682 each carry phosphoserine. The span at Pro703–Thr719 shows a compositional bias: low complexity. Residues Pro703–Asp739 form a disordered region. Residues Ser735 and Ser736 each carry the phosphoserine modification. The short motif at Tyr742–Met745 is the YXXM motif 5 element. Residue Ser770 is modified to Phosphoserine. Position 779 is a phosphothreonine (Thr779). Ser805 is subject to Phosphoserine. Positions Tyr823–Met826 match the YXXM motif 6 motif. Ser828 is modified (phosphoserine). The disordered stretch occupies residues Glu840–Pro1101. A compositionally biased stretch (pro residues) spans Thr859 to Val870. Phosphoserine is present on Ser915. Position 919 is a phosphotyrosine; by INSR (Tyr919). The span at Leu938–Ser967 shows a compositional bias: low complexity. Ser973 carries the post-translational modification Phosphoserine. Tyr978 carries the post-translational modification Phosphotyrosine; by INSR. The span at Pro1013–Ser1022 shows a compositional bias: pro residues. A YXXM motif 7 motif is present at residues Tyr1072–Met1075. At Thr1082 the chain carries Phosphothreonine. A compositionally biased stretch (pro residues) spans Pro1083–Pro1093. The residue at position 1100 (Ser1100) is a Phosphoserine. Ser1109 bears the Phosphoserine; by PLK1 mark. The segment at Leu1121 to Ala1296 is disordered. The segment covering Glu1150–Phe1165 has biased composition (low complexity). Thr1159 is modified (phosphothreonine). Residues Ser1162, Ser1174, Ser1176, and Ser1186 each carry the phosphoserine modification. The segment covering Ser1174–Arg1183 has biased composition (polar residues). Positions Gly1188 to Asp1198 are enriched in gly residues. Ser1203 is subject to Phosphoserine. The segment covering Gln1224–Gly1236 has biased composition (gly residues). A Phosphotyrosine; by INSR modification is found at Tyr1253. Positions Gly1263–Gln1277 are enriched in pro residues. A Glycyl lysine isopeptide (Lys-Gly) (interchain with G-Cter in ubiquitin) cross-link involves residue Lys1331.

In terms of assembly, interacts with PHIP. Interacts with SH2B1; this interaction enhances leptin-induced activation of the PI3-kinase pathway. Interacts with GRB2. Interacts with PIK3R1. Interacts with DVL2; this interaction promotes the Wnt/beta-catenin signaling pathway. Phosphorylation fluctuates in a cell-cycle dependent manner with hyperphosphorylation during mitosis. Phosphorylated at Ser-560 and Ser-1109 by PLK1; these phosphorylations prevent the activation of the PI3K pathway upon growth factor stimulation by inhibiting the binding between IRS2 and the PI3K pathway components and increasing the level of IRS2 protein degradation. In addition, they prevent premature mitotic exit. In terms of processing, monoubiquitinated by NEDD4; leading to enhanced IGF1 signaling. During cell cycle, ubiquitination and proteasomal degradation are controlled by FZR1.

It localises to the cytoplasm. Its subcellular location is the cytosol. Signaling adapter protein that participates in the signal transduction from two prominent receptor tyrosine kinases, insulin receptor/INSR and insulin-like growth factor I receptor/IGF1R. Plays therefore an important role in development, growth, glucose homeostasis as well as lipid metabolism. Upon phosphorylation by the insulin receptor, functions as a signaling scaffold that propagates insulin action through binding to SH2 domain-containing proteins including the p85 regulatory subunit of PI3K, NCK1, NCK2, GRB2 or SHP2. Recruitment of GRB2 leads to the activation of the guanine nucleotide exchange factor SOS1 which in turn triggers the Ras/Raf/MEK/MAPK signaling cascade. Activation of the PI3K/AKT pathway is responsible for most of insulin metabolic effects in the cell, and the Ras/Raf/MEK/MAPK is involved in the regulation of gene expression and in cooperation with the PI3K pathway regulates cell growth and differentiation. Acts a positive regulator of the Wnt/beta-catenin signaling pathway through suppression of DVL2 autophagy-mediated degradation leading to cell proliferation. Plays a role in cell cycle progression by promoting a robust spindle assembly checkpoint (SAC) during M-phase. In macrophages, IL4-induced tyrosine phosphorylation of IRS2 leads to the recruitment and activation of phosphoinositide 3-kinase (PI3K). This chain is Insulin receptor substrate 2 (IRS2), found in Homo sapiens (Human).